A 238-amino-acid polypeptide reads, in one-letter code: Probable transcriptional regulatory protein LACR_0237 (238 aa).

Belongs to the TACO1 family. YeeN subfamily.

The protein localises to the cytoplasm. The polypeptide is Probable transcriptional regulatory protein LACR_0237 (Lactococcus lactis subsp. cremoris (strain SK11)).